The following is an 884-amino-acid chain: DNA mismatch repair protein MutS (884 aa).

ATP is bound at residue 651 to 658; the sequence is GPNMSGKS. The interval 843 to 884 is disordered; the sequence is LRNQGKSQPAQKNCKKEPAPNRSPDPAVGDQLSLIPAPLFPD.

It belongs to the DNA mismatch repair MutS family.

Its function is as follows. This protein is involved in the repair of mismatches in DNA. It is possible that it carries out the mismatch recognition step. This protein has a weak ATPase activity. In Synechococcus sp. (strain JA-2-3B'a(2-13)) (Cyanobacteria bacterium Yellowstone B-Prime), this protein is DNA mismatch repair protein MutS.